The following is a 68-amino-acid chain: MPKHEFSVDMTCEGCSNAVTRVLNKLGGVQFDIDLPNKKVCINSEHSVDTLLETLGKTGKAVSYLGPK.

Residues 1–63 (MPKHEFSVDM…TLGKTGKAVS (63 aa)) form the HMA domain. Residues C12 and C15 each coordinate Cu cation. A Phosphoserine modification is found at S47. K60 carries the N6-acetyllysine modification.

This sequence belongs to the ATX1 family. In terms of assembly, homodimer. Interacts with ATP7B. Interacts with ATP7A. Interacts (via dimer form) with SLC31A1 (via C-terminal domain); this interaction improves ATOX1 stability and controls intracellular Cu(I) levels.

Its function is as follows. Binds and deliver cytosolic copper to the copper ATPase proteins. May be important in cellular antioxidant defense. The chain is Copper transport protein ATOX1 from Bos taurus (Bovine).